Reading from the N-terminus, the 147-residue chain is Myosin regulatory light chain (147 aa).

T1 is subject to N-acetylthreonine. EF-hand domains follow at residues 2-37, 73-108, and 109-144; these read ASAD…LGKN, EQSK…LGDA, and LTSS…GYPL. Ca(2+)-binding residues include D15, D17, D19, K21, E26, D86, N90, T92, and E97.

The polypeptide is Myosin regulatory light chain (Physarum polycephalum (Slime mold)).